The primary structure comprises 479 residues: Splicing factor ESS-2 homolog (479 aa).

Position 1 is an N-acetylmethionine (Met-1). Disordered stretches follow at residues 1–38 (MGTP…RSRQ) and 95–152 (GKIS…PSLD). Position 3 is a phosphothreonine (Thr-3). Residues 7-19 (SAGALFLSSASAP) are compositionally biased toward low complexity. The segment covering 135–145 (DDGEAGEEEEK) has biased composition (acidic residues). Residue Lys-145 forms a Glycyl lysine isopeptide (Lys-Gly) (interchain with G-Cter in SUMO2) linkage. At Ser-295 the chain carries Phosphoserine. Thr-389 is subject to Phosphothreonine. Phosphoserine occurs at positions 394 and 398. Residues 415 to 479 (RALRASYTPS…PARRKASDFF (65 aa)) are disordered. Residues 433-454 (TPAGGPQTPTSTPAPGSATRTP) are compositionally biased toward low complexity. Polar residues predominate over residues 455-466 (LTQDPASITDNL).

Belongs to the ESS2 family. Identified in the spliceosome C complex. Interacts with FRA10AC1. In terms of tissue distribution, in the adult, widely expressed with highest expression in the testis and brain. Also widely expressed in the embryo with highest levels in the anterior pons.

The protein localises to the nucleus. Its function is as follows. May be involved in pre-mRNA splicing. The chain is Splicing factor ESS-2 homolog (Ess2) from Mus musculus (Mouse).